A 560-amino-acid chain; its full sequence is Putative transport protein VV1438 (560 aa).

The next 5 membrane-spanning stretches (helical) occupy residues 5-25 (VVLL…AIGL), 37-57 (LGNS…GFSF), 66-86 (FMLF…GIFF), 91-111 (HYFT…YFAS), and 164-184 (VGYA…AKLL). 2 consecutive RCK C-terminal domains span residues 203–292 (RGLG…FRNG) and 293–376 (KEVF…RIGF). The next 6 helical transmembrane spans lie at 386–406 (LLAF…TMTF), 409–429 (VSFS…LGFL), 443–463 (ALNM…GLSA), 478–498 (IIGI…LVGA), 506–526 (ALLF…DIVN), and 539–559 (AGTY…LIIL).

The protein belongs to the AAE transporter (TC 2.A.81) family. YbjL subfamily.

It localises to the cell membrane. This Vibrio vulnificus (strain YJ016) protein is Putative transport protein VV1438.